Reading from the N-terminus, the 361-residue chain is MKFGWIKTTGTDSEERMDSVKDALESSIPGIIAEKDEISSVRELGNIKIVSDSLDADVVLINKGEDLEILKSAKLSGKETAVYVVINTKDDEVYATEVSKLDFVDYIVLEGSDWTIIPLENIIADLFGEEIKIVSVVTSVKDAEAAYEILEKGVDGVVLIPNDINEVKDFSKLIERMNSESVKLDYATVTKIEPVGSGDRVCIDTCSMMEMGEGMLIGSYSRGMFLVHSETVENPYVATRPFRVNAGPVHAYILCPENKTKYLSDLKAGDKVLVVNKNGETRESIIGRVKIEKRPLFLVEAEYNGENLRTILQNAETIRLVGEDGKPVSVVDLKVGTKVLIKPDENARHFGMAIKETIIEK.

It belongs to the archaeal-type DHQ synthase family.

The enzyme catalyses 2-amino-2,3,7-trideoxy-D-lyxo-hept-6-ulosonate + NAD(+) + H2O = 3-dehydroquinate + NH4(+) + NADH + H(+). In terms of biological role, catalyzes the oxidative deamination and cyclization of 2-amino-3,7-dideoxy-D-threo-hept-6-ulosonic acid (ADH) to yield 3-dehydroquinate (DHQ), which is fed into the canonical shikimic pathway of aromatic amino acid biosynthesis. The polypeptide is 3-dehydroquinate synthase (Methanococcus maripaludis (strain C6 / ATCC BAA-1332)).